Here is a 434-residue protein sequence, read N- to C-terminus: Chaperone SurA (434 aa).

The N-terminal stretch at 1-22 (MKPSKHLIFALFALAISQPTMA) is a signal peptide. PpiC domains follow at residues 173–274 (DVEY…KIMD) and 283–383 (IEEV…QLEE).

Its subcellular location is the periplasm. It carries out the reaction [protein]-peptidylproline (omega=180) = [protein]-peptidylproline (omega=0). Its function is as follows. Chaperone involved in the correct folding and assembly of outer membrane proteins. Recognizes specific patterns of aromatic residues and the orientation of their side chains, which are found more frequently in integral outer membrane proteins. May act in both early periplasmic and late outer membrane-associated steps of protein maturation. The polypeptide is Chaperone SurA (Shewanella sp. (strain MR-4)).